Here is a 744-residue protein sequence, read N- to C-terminus: Tripartite motif-containing protein 2 (744 aa).

A Phosphoserine modification is found at Ser10. Residues 23–64 (CSICLERYKNPKVLPCLHTFCERCLQNYIPAHSLTLSCPVCR) form an RING-type zinc finger. The B box-type zinc-finger motif lies at 113–154 (GKPLSCPNHDGNVMDFYCQSCETAMCRECTEGEHAEHPTVPL). Zn(2+)-binding residues include Cys118, His121, Cys141, and His146. Residues 320–421 (TTNAVASETV…IRGSPFKLKV (102 aa)) form a Filamin repeat. Phosphothreonine is present on Thr371. Residues Ser375, Ser424, and Ser428 each carry the phosphoserine modification. The interval 432 to 462 (EGVKRRVKSPGSGHVKQKAVKRPASMYSTGK) is disordered. NHL repeat units follow at residues 473–516 (IFRV…FSND), 520–563 (KSRF…FSSD), 564–605 (GKFK…FQPN), 609–652 (VTRF…FNQE), 656–699 (MLKF…FDGS), and 700–743 (GSFL…YRYL).

It belongs to the TRIM/RBCC family. Forms homooligomers. Interacts with TRIM3; this interaction reduces TRIM2 activity. Interacts with myosin V; myosin V may not be a substrate for ubiquitination. Interacts with NEFL. Interacts with phosphorylated BCL2L11. Interacts with SIRPA. In terms of processing, RING-type zinc finger-dependent and UBE2D1-dependent autoubiquitination.

The protein localises to the cytoplasm. The catalysed reaction is S-ubiquitinyl-[E2 ubiquitin-conjugating enzyme]-L-cysteine + [acceptor protein]-L-lysine = [E2 ubiquitin-conjugating enzyme]-L-cysteine + N(6)-ubiquitinyl-[acceptor protein]-L-lysine.. The protein operates within protein modification; protein ubiquitination. UBE2D1-dependent E3 ubiquitin-protein ligase that mediates the ubiquitination of NEFL and of phosphorylated BCL2L11. Plays a neuroprotective function. May play a role in neuronal rapid ischemic tolerance. Plays a role in antiviral immunity and limits New World arenavirus infection independently of its ubiquitin ligase activity. This is Tripartite motif-containing protein 2 (TRIM2) from Ailuropoda melanoleuca (Giant panda).